A 470-amino-acid polypeptide reads, in one-letter code: Putative multidrug resistance protein MdtD (470 aa).

Residues 1–11 are Periplasmic-facing; it reads MTELPDNTRWQ. A helical membrane pass occupies residues 12-32; sequence LWIVAFGFFMQSLDTTIVNTA. The Cytoplasmic segment spans residues 33–48; that stretch reads LPSMAKSLGESPLHMH. A helical membrane pass occupies residues 49–69; that stretch reads MVVVSYVLTVAVMLPASGWLA. Residues 70–76 lie on the Periplasmic side of the membrane; the sequence is DKIGVRN. A helical membrane pass occupies residues 77 to 97; the sequence is IFFAAIVLFTLGSLFCALSGT. Over 98–101 the chain is Cytoplasmic; it reads LNQL. The helical transmembrane segment at 102 to 124 threads the bilayer; that stretch reads VLARVLQGVGGAMMVPVGRLTVM. Residues 125 to 137 are Periplasmic-facing; that stretch reads KIVPRTQYMAAMT. A helical membrane pass occupies residues 138-158; it reads FVTLPGQIGPLLGPALGGVLV. At 159–164 the chain is on the cytoplasmic side; the sequence is EYASWH. A helical membrane pass occupies residues 165–185; that stretch reads WIFLINIPVGIVGAMATFMLM. Residues 186-196 lie on the Periplasmic side of the membrane; it reads PNYTIETRRFD. The chain crosses the membrane as a helical span at residues 197 to 217; sequence LPGFLLLAIGMAVLTLALDGS. Topologically, residues 218–224 are cytoplasmic; it reads KSMGISP. A helical transmembrane segment spans residues 225-245; it reads WTLAGLAAGGAAAILLYLFHA. Residues 246–262 lie on the Periplasmic side of the membrane; sequence KKNSGALFSLRLFRTPT. A helical membrane pass occupies residues 263–283; sequence FSLGLLGSFAGRIGSGMLPFM. Topologically, residues 284–285 are cytoplasmic; that stretch reads TP. Residues 286-306 traverse the membrane as a helical segment; that stretch reads VFLQIGLGFSPFHAGLMMIPM. At 307–341 the chain is on the periplasmic side; sequence VLGSMGMKRIVVQIVNRFGYRRVLVATTLGLALVS. Residues 342-362 traverse the membrane as a helical segment; sequence LLFMSVALLGWYYLLPLVLLL. Topologically, residues 363-395 are cytoplasmic; that stretch reads QGMVNSARFSSMNTLTLKDLPDTLASSGNSLLS. The helical transmembrane segment at 396 to 416 threads the bilayer; sequence MIMQLSMSIGVTIAGMLLGMF. Residues 417-430 are Periplasmic-facing; that stretch reads GQQHIGIDSSATHH. Residues 431–451 traverse the membrane as a helical segment; it reads VFMYTWLCMAVIIALPAIIFA. The Cytoplasmic portion of the chain corresponds to 452–470; sequence RVPNDTQQNMVISRRKRSL.

It belongs to the major facilitator superfamily. TCR/Tet family.

Its subcellular location is the cell inner membrane. The sequence is that of Putative multidrug resistance protein MdtD from Salmonella dublin (strain CT_02021853).